The sequence spans 81 residues: U-megalopygitoxin(3)-Mo4 (81 aa).

The first 20 residues, 1–20 (MNSKFVLIVVFLAVVSICFA), serve as a signal peptide directing secretion.

This sequence belongs to the caterpillar 3 family. In terms of processing, contains 3 disulfide bonds. Expressed by the venom apparatus.

It is found in the secreted. Its function is as follows. Probable toxin. This is U-megalopygitoxin(3)-Mo4 from Megalopyge opercularis (Southern flannel moth).